Reading from the N-terminus, the 127-residue chain is Protein ApaG (127 aa).

Residues 3–127 form the ApaG domain; it reads DTNKYRIEVQ…FVLASPRALH (125 aa).

In Dechloromonas aromatica (strain RCB), this protein is Protein ApaG.